A 528-amino-acid chain; its full sequence is O-methylsterigmatocystin oxidoreductase (528 aa).

Residue Cys-440 participates in heme binding.

Belongs to the cytochrome P450 family. Requires heme as cofactor.

The enzyme catalyses 8-O-methylsterigmatocystin + 2 reduced [NADPH--hemoprotein reductase] + 2 O2 = aflatoxin B1 + methanol + 2 oxidized [NADPH--hemoprotein reductase] + CO2 + H2O + 2 H(+). It carries out the reaction 8-O-methyldihydrosterigmatocystin + 2 reduced [NADPH--hemoprotein reductase] + 2 O2 = aflatoxin B2 + methanol + 2 oxidized [NADPH--hemoprotein reductase] + CO2 + H2O + 2 H(+). It participates in mycotoxin biosynthesis; aflatoxin biosynthesis. In terms of biological role, converts O-methylsterigmatocystin (OMST) to aflatoxin B1 and converts dihydro-O-methylsterigmatocystin (DHOMST) to aflatoxin B2 in the aflatoxin biosynthesis pathway. This Aspergillus flavus protein is O-methylsterigmatocystin oxidoreductase (ordA).